The primary structure comprises 198 residues: Ribosome maturation factor RimP (198 aa).

This sequence belongs to the RimP family.

It localises to the cytoplasm. In terms of biological role, required for maturation of 30S ribosomal subunits. The chain is Ribosome maturation factor RimP from Rhizobium etli (strain CIAT 652).